We begin with the raw amino-acid sequence, 241 residues long: Small ribosomal subunit protein uS2c (241 aa).

Belongs to the universal ribosomal protein uS2 family.

Its subcellular location is the plastid. The protein resides in the chloroplast. This is Small ribosomal subunit protein uS2c (rps2) from Porphyra purpurea (Red seaweed).